The chain runs to 339 residues: Dihydroorotate dehydrogenase (quinone) (339 aa).

FMN-binding positions include 62 to 66 (AGMDK) and Thr-86. Lys-66 lines the substrate pocket. Residue 111 to 115 (NRMGF) coordinates substrate. Positions 139 and 172 each coordinate FMN. Asn-172 lines the substrate pocket. The Nucleophile role is filled by Ser-175. A substrate-binding site is contributed by Asn-177. Residues Lys-217 and Thr-245 each contribute to the FMN site. 246–247 (NT) lines the substrate pocket. FMN contacts are provided by residues Gly-268, Gly-297, and 318 to 319 (YS).

It belongs to the dihydroorotate dehydrogenase family. Type 2 subfamily. Monomer. FMN is required as a cofactor.

It is found in the cell membrane. The enzyme catalyses (S)-dihydroorotate + a quinone = orotate + a quinol. It functions in the pathway pyrimidine metabolism; UMP biosynthesis via de novo pathway; orotate from (S)-dihydroorotate (quinone route): step 1/1. Functionally, catalyzes the conversion of dihydroorotate to orotate with quinone as electron acceptor. In Shewanella oneidensis (strain ATCC 700550 / JCM 31522 / CIP 106686 / LMG 19005 / NCIMB 14063 / MR-1), this protein is Dihydroorotate dehydrogenase (quinone).